Here is a 356-residue protein sequence, read N- to C-terminus: Putative KilA-N domain-containing protein R878 (356 aa).

Basic residues predominate over residues 1–12 (MKVRKSNNKPLK). The segment at 1-114 (MKVRKSNNKP…DDDGSDNNVY (114 aa)) is disordered. Residues 14–46 (SASFTSGTKTGSKSAKSVNSGSKSMKSTKSSSK) are compositionally biased toward low complexity. Positions 66-114 (SDNDELSDNEISDNESSDDDEISDNESSDDDEISDNEISDDDGSDNNVY) are enriched in acidic residues. A KilA-N domain is found at 130–239 (NYSKGKFGNF…VRIGFCMEEW (110 aa)).

This chain is Putative KilA-N domain-containing protein R878, found in Acanthamoeba polyphaga (Amoeba).